We begin with the raw amino-acid sequence, 446 residues long: Histidine--tRNA ligase (446 aa).

This sequence belongs to the class-II aminoacyl-tRNA synthetase family. As to quaternary structure, homodimer.

The protein resides in the cytoplasm. The enzyme catalyses tRNA(His) + L-histidine + ATP = L-histidyl-tRNA(His) + AMP + diphosphate + H(+). This chain is Histidine--tRNA ligase, found in Paraburkholderia phytofirmans (strain DSM 17436 / LMG 22146 / PsJN) (Burkholderia phytofirmans).